Consider the following 360-residue polypeptide: DNA polymerase IV (360 aa).

The region spanning 8 to 191 is the UmuC domain; sequence VLHVDMDSFF…LPVGRIPGIG (184 aa). The Mg(2+) site is built by Asp-12 and Asp-110. Residue Glu-111 is part of the active site.

Belongs to the DNA polymerase type-Y family. As to quaternary structure, monomer. Mg(2+) is required as a cofactor.

Its subcellular location is the cytoplasm. It carries out the reaction DNA(n) + a 2'-deoxyribonucleoside 5'-triphosphate = DNA(n+1) + diphosphate. Its function is as follows. Poorly processive, error-prone DNA polymerase involved in untargeted mutagenesis. Copies undamaged DNA at stalled replication forks, which arise in vivo from mismatched or misaligned primer ends. These misaligned primers can be extended by PolIV. Exhibits no 3'-5' exonuclease (proofreading) activity. May be involved in translesional synthesis. The chain is DNA polymerase IV from Methanoculleus marisnigri (strain ATCC 35101 / DSM 1498 / JR1).